Consider the following 333-residue polypeptide: UPF0284 protein VNG_1572C (333 aa).

This sequence belongs to the UPF0284 family.

The chain is UPF0284 protein VNG_1572C from Halobacterium salinarum (strain ATCC 700922 / JCM 11081 / NRC-1) (Halobacterium halobium).